The primary structure comprises 207 residues: Low-molecular weight cobalt-containing nitrile hydratase subunit alpha (207 aa).

Positions 109, 112, 113, and 114 each coordinate Co(3+).

It belongs to the nitrile hydratase subunit alpha family. As to quaternary structure, heterodimer of an alpha and a beta chain. Co(3+) is required as a cofactor.

It catalyses the reaction an aliphatic primary amide = an aliphatic nitrile + H2O. Its function is as follows. NHase catalyzes the hydration of various nitrile compounds to the corresponding amides. This chain is Low-molecular weight cobalt-containing nitrile hydratase subunit alpha, found in Rhodococcus rhodochrous.